The sequence spans 340 residues: Glycerol-3-phosphate dehydrogenase [NAD(P)+] (340 aa).

The NADPH site is built by Ser11, Trp12, Arg33, and Lys106. Sn-glycerol 3-phosphate is bound by residues Lys106, Gly137, and Ser139. NADPH is bound at residue Ala141. Residues Lys192, Asp245, Ser255, Arg256, and Asn257 each contribute to the sn-glycerol 3-phosphate site. Lys192 functions as the Proton acceptor in the catalytic mechanism. Residue Arg256 coordinates NADPH. NADPH contacts are provided by Val280 and Glu282.

It belongs to the NAD-dependent glycerol-3-phosphate dehydrogenase family.

Its subcellular location is the cytoplasm. It carries out the reaction sn-glycerol 3-phosphate + NAD(+) = dihydroxyacetone phosphate + NADH + H(+). The enzyme catalyses sn-glycerol 3-phosphate + NADP(+) = dihydroxyacetone phosphate + NADPH + H(+). Its pathway is membrane lipid metabolism; glycerophospholipid metabolism. In terms of biological role, catalyzes the reduction of the glycolytic intermediate dihydroxyacetone phosphate (DHAP) to sn-glycerol 3-phosphate (G3P), the key precursor for phospholipid synthesis. The polypeptide is Glycerol-3-phosphate dehydrogenase [NAD(P)+] (Bacillus cereus (strain 03BB102)).